The sequence spans 250 residues: 5-oxoprolinase subunit A (250 aa).

It belongs to the LamB/PxpA family. Forms a complex composed of PxpA, PxpB and PxpC.

It carries out the reaction 5-oxo-L-proline + ATP + 2 H2O = L-glutamate + ADP + phosphate + H(+). Functionally, catalyzes the cleavage of 5-oxoproline to form L-glutamate coupled to the hydrolysis of ATP to ADP and inorganic phosphate. The chain is 5-oxoprolinase subunit A from Streptomyces avermitilis (strain ATCC 31267 / DSM 46492 / JCM 5070 / NBRC 14893 / NCIMB 12804 / NRRL 8165 / MA-4680).